A 146-amino-acid polypeptide reads, in one-letter code: Ribosome maturation factor RimP (146 aa).

Belongs to the RimP family.

Its subcellular location is the cytoplasm. Functionally, required for maturation of 30S ribosomal subunits. The polypeptide is Ribosome maturation factor RimP (Helicobacter pylori (strain HPAG1)).